Here is a 585-residue protein sequence, read N- to C-terminus: MSQAEAITDTGEIESVSGPVVTATGLDAQMNDVVYVGDEGLMGEVIEIEGDVTTIQVYEETSGIGPGQPVDNTGEPLTVDLGPGMLDSIYDGVQRPLDVLEDEMGAFLDRGVDAPGIDLDTDWEFEPTVEAGDEVAAGDVVGTVDETVSIEHKVLVPPRSDGGEVVAVESGTFTVDDTVVELDTGEEIQMHQEWPVRRQRPTVDKQTPTEPLVSGQRILDGLFPIAKGGTAAIPGPFGSGKTVTQQSLAKFADADIVVYIGCGERGNEMTEVIEDFPELPDPQTGNPLMARTTLIANTSNMPVAARESCIYTGITIAEYYRDMGYDVALMADSTSRWAEAMREISSRLEEMPGEEGYPAYLAARLSEFYERAGYFENFNGTEGSISVIGAVSPPGGDFSEPVTQNTLRIVKTFWALDSDLAERRHFPAINWDESYSLYKDQLDPWFTDNVVDDWAEQRQWAVDILDEESELEEIVQLVGKDALPEDQQLTLEVARYIREAWLQQNALHDVDRYCPPEKTYAILSGIKTLHEESFEALDAGVPVEEITSIDAAPRLNRLGTTPDDEHEAEVAEIKQQITEQLRELY.

Residue 235 to 242 coordinates ATP; it reads GPFGSGKT.

The protein belongs to the ATPase alpha/beta chains family. As to quaternary structure, has multiple subunits with at least A(3), B(3), C, D, E, F, H, I and proteolipid K(x).

It is found in the cell membrane. It catalyses the reaction ATP + H2O + 4 H(+)(in) = ADP + phosphate + 5 H(+)(out). Its function is as follows. Component of the A-type ATP synthase that produces ATP from ADP in the presence of a proton gradient across the membrane. The A chain is the catalytic subunit. This chain is A-type ATP synthase subunit A, found in Halobacterium salinarum (strain ATCC 29341 / DSM 671 / R1).